Reading from the N-terminus, the 117-residue chain is 5-hydroxyisourate hydrolase (117 aa).

Histidine 7, arginine 45, and tyrosine 114 together coordinate substrate.

The protein belongs to the transthyretin family. 5-hydroxyisourate hydrolase subfamily. In terms of assembly, homotetramer.

The catalysed reaction is 5-hydroxyisourate + H2O = 5-hydroxy-2-oxo-4-ureido-2,5-dihydro-1H-imidazole-5-carboxylate + H(+). Functionally, catalyzes the hydrolysis of 5-hydroxyisourate (HIU) to 2-oxo-4-hydroxy-4-carboxy-5-ureidoimidazoline (OHCU). This chain is 5-hydroxyisourate hydrolase, found in Ralstonia nicotianae (strain ATCC BAA-1114 / GMI1000) (Ralstonia solanacearum).